The following is a 556-amino-acid chain: Myb/SANT-like DNA-binding domain-containing protein 2 (556 aa).

Composition is skewed to polar residues over residues 1-10 (MAASCGSSQL) and 36-45 (GNPSLSDPST). Positions 1–82 (MAASCGSSQL…GGASPSVSFS (82 aa)) are disordered. The span at 56 to 74 (PAAGGAGLGGGGAAGGRGG) shows a compositional bias: gly residues. Residues 99 to 169 (SWTPAETNAL…QCRERIKTLR (71 aa)) enclose the Myb-like domain. The interval 431-458 (PRSPLAEPRGADPSNETPGELEVPSPQA) is disordered.

The chain is Myb/SANT-like DNA-binding domain-containing protein 2 (MSANTD2) from Gallus gallus (Chicken).